The sequence spans 255 residues: Small ribosomal subunit protein eS1 (255 aa).

Residues 1–18 show a composition bias toward basic residues; it reads MAVGKNKRLSKGKKGLKK. The disordered stretch occupies residues 1–22; sequence MAVGKNKRLSKGKKGLKKRAQD. The residue at position 2 (alanine 2) is an N-acetylalanine; partial.

This sequence belongs to the eukaryotic ribosomal protein eS1 family. In terms of assembly, component of the small ribosomal subunit. Mature ribosomes consist of a small (40S) and a large (60S) subunit. The 40S subunit contains about 33 different proteins and 1 molecule of RNA (18S). The 60S subunit contains about 49 different proteins and 3 molecules of RNA (25S, 5.8S and 5S).

Its subcellular location is the cytoplasm. The chain is Small ribosomal subunit protein eS1 from Uncinocarpus reesii (strain UAMH 1704).